The following is a 619-amino-acid chain: Eukaryotic translation initiation factor 2-alpha kinase 1 (619 aa).

The interval 1-40 is disordered; the sequence is MLGGSSVDGERDTDDDAAGAVAAPPAIDFPAEVSDPKYDE. Residues 18-28 are compositionally biased toward low complexity; sequence AGAVAAPPAID. Residues 85 to 104 carry the SIFI-degron motif; the sequence is LHSKQVFKLLCQTFIKMGLL. The Protein kinase domain maps to 167–580; the sequence is FEELAILGKG…ALQLLQSELF (414 aa). ATP is bound by residues 173 to 181 and K196; that span reads LGKGGYGRV. T283 carries the phosphothreonine modification. The stretch at 408–413 is one HRM 1 repeat; sequence ACPYVM. D440 acts as the Proton acceptor in catalysis. Residues T483, T485, and T490 each carry the phosphothreonine; by autocatalysis modification. One copy of the HRM 2 repeat lies at 549-554; sequence RCPVQA.

It belongs to the protein kinase superfamily. Ser/Thr protein kinase family. GCN2 subfamily. In terms of assembly, synthesized in an inactive form that binds to the N-terminal domain of CDC37. Has to be associated with a multiprotein complex containing Hsp90, CDC37 and PPP5C for maturation and activation by autophosphorylation. The phosphatase PPP5C modulates this activation. Homodimer; homodimerizes in presence of heme, forming a disulfide-linked inactive homodimer. Interacts with DELE1; binds both to full-length DELE1 and processed form of DELE1 (S-DELE1) in response to stress, leading to activate its protein kinase activity and trigger the integrated stress response (ISR). Activated by autophosphorylation; phosphorylated predominantly on serine and threonine residues, but also on tyrosine residues. Autophosphorylation at Thr-485 is required for kinase activation. The active autophosphorylated form apparently is largely refractory to cellular heme fluctuations. Post-translationally, ubiquitinated and degraded by the SIFI complex once the mitochondrial stress has been resolved, thereby providing stress response silencing. Within the SIFI complex, UBR4 initiates ubiquitin chain that are further elongated or branched by KCMF1. As to expression, expressed predominantly in erythroid cells, mature reticulocytes, as well as fetal liver nucleated erythroid cells. At much lower levels, expressed in hepatocytes and bone marrow-derived macrophages (at protein level).

It is found in the cytoplasm. The enzyme catalyses L-seryl-[protein] + ATP = O-phospho-L-seryl-[protein] + ADP + H(+). The catalysed reaction is L-threonyl-[protein] + ATP = O-phospho-L-threonyl-[protein] + ADP + H(+). In normal conditions, the protein kinase activity is inhibited; inhibition is relieved by various stress conditions. Inhibited by heme: in presence of heme, forms a disulfide-linked inactive homodimer. Heme depletion relieves inhibition and stimulates kinase activity by autophosphorylation. Inhibited by the heme metabolites biliverdin and bilirubin. Induced by oxidative stress generated by arsenite treatment. Binding of nitric oxide (NO) to the heme iron in the N-terminal heme-binding domain activates the kinase activity, while binding of carbon monoxide (CO) suppresses kinase activity. Protein kinase activity is also activated upon binding to DELE1 in response to various stress, triggering the integrated stress response (ISR): activated by full-length DELE1 in response to iron deficiency, while it is activated by the processed form of DELE1 (S-DELE1) in response to mitochondrial stress. Its function is as follows. Metabolic-stress sensing protein kinase that phosphorylates the alpha subunit of eukaryotic translation initiation factor 2 (EIF2S1/eIF-2-alpha) in response to various stress conditions. Key activator of the integrated stress response (ISR) required for adaptation to various stress, such as heme deficiency, oxidative stress, osmotic shock, mitochondrial dysfunction and heat shock. EIF2S1/eIF-2-alpha phosphorylation in response to stress converts EIF2S1/eIF-2-alpha in a global protein synthesis inhibitor, leading to a global attenuation of cap-dependent translation, while concomitantly initiating the preferential translation of ISR-specific mRNAs, such as the transcriptional activator ATF4, and hence allowing ATF4-mediated reprogramming. Acts as a key sensor of heme-deficiency: in normal conditions, binds hemin via a cysteine thiolate and histidine nitrogenous coordination, leading to inhibit the protein kinase activity. This binding occurs with moderate affinity, allowing it to sense the heme concentration within the cell: heme depletion relieves inhibition and stimulates kinase activity, activating the ISR. Thanks to this unique heme-sensing capacity, plays a crucial role to shut off protein synthesis during acute heme-deficient conditions. In red blood cells (RBCs), controls hemoglobin synthesis ensuring a coordinated regulation of the synthesis of its heme and globin moieties. It thereby plays an essential protective role for RBC survival in anemias of iron deficiency. Iron deficiency also triggers activation by full-length DELE1. Also activates the ISR in response to mitochondrial dysfunction: HRI/EIF2AK1 protein kinase activity is activated upon binding to the processed form of DELE1 (S-DELE1), thereby promoting the ATF4-mediated reprogramming. Also acts as an activator of mitophagy in response to mitochondrial damage: catalyzes phosphorylation of eIF-2-alpha (EIF2S1) following activation by S-DELE1, thereby promoting mitochondrial localization of EIF2S1, triggering PRKN-independent mitophagy. This chain is Eukaryotic translation initiation factor 2-alpha kinase 1, found in Mus musculus (Mouse).